The following is a 383-amino-acid chain: UDP-N-acetylglucosamine--N-acetylmuramyl-(pentapeptide) pyrophosphoryl-undecaprenol N-acetylglucosamine transferase (383 aa).

UDP-N-acetyl-alpha-D-glucosamine-binding positions include 10-12 (TGG), Asn-124, Arg-165, Ser-190, Ile-245, and Gln-290. The tract at residues 363 to 383 (SPFGQAREPGQKPARPPDPAS) is disordered.

This sequence belongs to the glycosyltransferase 28 family. MurG subfamily.

It is found in the cell inner membrane. The catalysed reaction is di-trans,octa-cis-undecaprenyl diphospho-N-acetyl-alpha-D-muramoyl-L-alanyl-D-glutamyl-meso-2,6-diaminopimeloyl-D-alanyl-D-alanine + UDP-N-acetyl-alpha-D-glucosamine = di-trans,octa-cis-undecaprenyl diphospho-[N-acetyl-alpha-D-glucosaminyl-(1-&gt;4)]-N-acetyl-alpha-D-muramoyl-L-alanyl-D-glutamyl-meso-2,6-diaminopimeloyl-D-alanyl-D-alanine + UDP + H(+). It functions in the pathway cell wall biogenesis; peptidoglycan biosynthesis. In terms of biological role, cell wall formation. Catalyzes the transfer of a GlcNAc subunit on undecaprenyl-pyrophosphoryl-MurNAc-pentapeptide (lipid intermediate I) to form undecaprenyl-pyrophosphoryl-MurNAc-(pentapeptide)GlcNAc (lipid intermediate II). The protein is UDP-N-acetylglucosamine--N-acetylmuramyl-(pentapeptide) pyrophosphoryl-undecaprenol N-acetylglucosamine transferase of Anaeromyxobacter dehalogenans (strain 2CP-1 / ATCC BAA-258).